A 217-amino-acid chain; its full sequence is Ribosome maturation factor RimP (217 aa).

This sequence belongs to the RimP family.

The protein localises to the cytoplasm. Required for maturation of 30S ribosomal subunits. This is Ribosome maturation factor RimP from Nocardia farcinica (strain IFM 10152).